The chain runs to 118 residues: Large ribosomal subunit protein bL19 (118 aa).

The protein belongs to the bacterial ribosomal protein bL19 family.

This protein is located at the 30S-50S ribosomal subunit interface and may play a role in the structure and function of the aminoacyl-tRNA binding site. The chain is Large ribosomal subunit protein bL19 from Geobacter sulfurreducens (strain ATCC 51573 / DSM 12127 / PCA).